A 433-amino-acid polypeptide reads, in one-letter code: Urokinase-type plasminogen activator (433 aa).

An N-terminal signal peptide occupies residues 1-20 (MRALLAHLLLCVLVVSASKG). In terms of domain architecture, EGF-like spans 26-62 (VPSDCGCLNGGTCMSNKYFSSIHWCNCPKKFGGQHCE). Disulfide bonds link C30–C38, C32–C50, C52–C61, C69–C150, C90–C132, and C121–C145. Residues 33–56 (LNGGTCMSNKYFSSIHWCNCPKKF) form a binds urokinase plasminogen activator surface receptor region. Positions 69-150 (CYEGNGHFYR…RVQECMVHNC (82 aa)) constitute a Kringle domain. The segment at 151–177 (ADGKKPSSPPEELQFQCGQRTLRPRFK) is connecting peptide. S157 bears the Phosphoserine mark. Intrachain disulfides connect C167/C298, C208/C224, C216/C287, C315/C384, C347/C363, and C374/C402. The Peptidase S1 domain occupies 178-426 (IVGGEFTTIE…FLPWIHSHTR (249 aa)). Active-site charge relay system residues include H223 and D274. N324 carries an N-linked (GlcNAc...) asparagine glycan. Residue S325 is modified to Phosphoserine. S378 acts as the Charge relay system in catalysis.

The protein belongs to the peptidase S1 family. Found in high and low molecular mass forms. Each consists of two chains, A and B. The high molecular mass form contains a long chain A which is cleaved to yield a short chain A. Forms heterodimer with SERPINA5. Binds LRP1B; binding is followed by internalization and degradation. Interacts with MRC2. Interacts with PLAUR. In complex with SERPINE1, interacts with PLAUR/uPAR. Interacts with SORL1 and LRP1, either alone or in complex with SERPINE1; these interactions are abolished in the presence of LRPAP1/RAP. The ternary complex composed of PLAUR-PLAU-PAI1 also interacts with SORLA. In terms of processing, phosphorylation of Ser-157 and Ser-325 abolishes proadhesive ability but does not interfere with receptor binding. Post-translationally, produced as an inactive single-chain protein (pro-uPA or sc-uPA), is processed into the active disulfide-linked two-chain form of PLAU/uPA by a proteolytic event mediated, at least, by TMPRSS4.

It is found in the secreted. The enzyme catalyses Specific cleavage of Arg-|-Val bond in plasminogen to form plasmin.. With respect to regulation, inhibited by SERPINA5. Inhibited by SERPINE1. Specifically cleaves the zymogen plasminogen to form the active enzyme plasmin. The chain is Urokinase-type plasminogen activator (PLAU) from Papio cynocephalus (Yellow baboon).